We begin with the raw amino-acid sequence, 300 residues long: Dioxygenase FUM3 (300 aa).

Fe cation contacts are provided by His-146, Asp-148, and His-222.

Belongs to the PhyH family. In terms of assembly, homodimer. Fe cation is required as a cofactor.

Its pathway is mycotoxin biosynthesis. Functionally, dioxygenase; part of the gene cluster that mediates the biosynthesis of fumonisins B1 (FB1), B2 (FB2), B3 (FB3), and B4 (FB4), which are carcinogenic mycotoxins. Within the pathway, FUM3 performs the C-5 hydroxylation present in FB1 and FB2 and which occurs late in the biosynthesis. The biosynthesis starts with the FUM1-catalyzed carbon chain assembly from one molecule of acetyl-CoA, eight molecules of malonyl-CoA, and two molecules of methionine (in S-adenosyl form). The C18 polyketide chain is released from the enzyme by a nucleophilic attack of a carbanion, which is derived from R-carbon of alanine by decarboxylation, on the carbonyl carbon of polyketide acyl chain. This step is catalyzed by the pyridoxal 5'-phosphate-dependent aminoacyl transferase FUM8. The resultant 3-keto intermediate is then stereospecifically reduced to a 3-hydroxyl product by reductase FUM13. Subsequent oxidations at C-10 by the cytochrome P450 monooxygenase FUM2, C-14 and C-15 by FUM6, FUM12 or FUM15, tricarballylic esterification of the hydroxyl groups on C-14 and C-15 by acyltransferase FUM14, and C-5 hydroxylation by 2-keto-glutarate-dependent dioxygenase FUM3 furnish the biosynthesis of fumonisins. The tricarballylic moieties are most likely derived from the citric acid cycle, and their addition to the carbon backbone may involve FUM7, FUM10, FUM11 and FUM14. In Gibberella moniliformis (strain M3125 / FGSC 7600) (Maize ear and stalk rot fungus), this protein is Dioxygenase FUM3.